Consider the following 217-residue polypeptide: Thiopurine S-methyltransferase (217 aa).

Positions 10, 45, 66, and 123 each coordinate S-adenosyl-L-methionine.

This sequence belongs to the class I-like SAM-binding methyltransferase superfamily. TPMT family.

It is found in the cytoplasm. The catalysed reaction is S-adenosyl-L-methionine + a thiopurine = S-adenosyl-L-homocysteine + a thiopurine S-methylether.. This is Thiopurine S-methyltransferase from Pseudomonas fluorescens (strain Pf0-1).